A 592-amino-acid polypeptide reads, in one-letter code: Syntaxin-binding protein 3 (592 aa).

Positions 1–255 are mediates interaction with DOC2B; the sequence is MAPPVSERGL…STVLHELTFQ (255 aa).

The protein belongs to the STXBP/unc-18/SEC1 family. As to quaternary structure, interacts with STX4. Interacts with DOC2B; the interaction is direct, occurs at the cell membrane, excludes interaction with STX4 and regulates glucose-stimulated insulin secretion. Phosphorylated by PKC in platelets in response to thrombin stimulation; phosphorylation inhibits binding to STX4. As to expression, ubiquitously expressed in all tissues tested.

Its subcellular location is the cytoplasm. It localises to the cytosol. The protein localises to the cell membrane. Its function is as follows. Together with STX4 and VAMP2, may play a role in insulin-dependent movement of GLUT4 and in docking/fusion of intracellular GLUT4-containing vesicles with the cell surface in adipocytes. The protein is Syntaxin-binding protein 3 (Stxbp3) of Mus musculus (Mouse).